A 258-amino-acid polypeptide reads, in one-letter code: MLAKRIIPCLDVRDGQVVKGVQFRNHEIIGDIVPLAKRYADEGADELVFYDITASSDGRVVDKSWVARVAEVIDIPFCVAGGIRSIDDAAKILSFGADKISINSPALADSTLITRLADRFGVQCIVVGIDTWFDDATGKYHVNQYTGDENRTRVTQWETLDWVQEVQQRGAGEIVLNMMNQDGVRNGYDLTQLKKVRDVCRVPLIASGGAGTMEHFLEAFRDADVDGALAASVFHKQIINIGELKAYLAGQGVEIRIC.

Active-site residues include Asp-11 and Asp-130.

It belongs to the HisA/HisF family. In terms of assembly, heterodimer of HisH and HisF.

It is found in the cytoplasm. The catalysed reaction is 5-[(5-phospho-1-deoxy-D-ribulos-1-ylimino)methylamino]-1-(5-phospho-beta-D-ribosyl)imidazole-4-carboxamide + L-glutamine = D-erythro-1-(imidazol-4-yl)glycerol 3-phosphate + 5-amino-1-(5-phospho-beta-D-ribosyl)imidazole-4-carboxamide + L-glutamate + H(+). Its pathway is amino-acid biosynthesis; L-histidine biosynthesis; L-histidine from 5-phospho-alpha-D-ribose 1-diphosphate: step 5/9. Its function is as follows. IGPS catalyzes the conversion of PRFAR and glutamine to IGP, AICAR and glutamate. The HisF subunit catalyzes the cyclization activity that produces IGP and AICAR from PRFAR using the ammonia provided by the HisH subunit. The chain is Imidazole glycerol phosphate synthase subunit HisF from Salmonella agona (strain SL483).